Here is a 967-residue protein sequence, read N- to C-terminus: MRATFHLFTFIFLLLFSSVICISTPGFRNDHESIGDDEEKTSSTILVSTIDGRLRALDSETGEIKWTLQEEPVLRSPSAVKQGFTFLPNPLDGSLYVLKNSSLKKLPFNIPQLVHASPCKGNDGILYAGSKKDVWFGIDPKTGLKVETLSSASADRICPANQKQTIFLGRTEYRVSMFDEKNRGKTWNATFNDYSAHLLPEVNTWPFKHYASSSHGYILTFDRETGEMRWEQDLKQPVVALYLLRDDGLHKLPFEVMGKETMENVAKNIFTVDQWPTVLGVNAADPQTTSLTNQFFPALFVGESSFGLYAIEALVDHQTITYSPKLLGPPLLEGPAPIALTEMEKEEYLPPRRPIIRNIPPSITHKTSDGEYLLLGYHDRPMMTMATIIPTRYPVPGPHKAIGSTIERPPPQLLGPVEPQKHEDTSFILLLLNNHPIPFYATLVTMFALLLTVIWQCGRQWDQQKSTSRMDSFEIVNNPGESRSAQTSKQSNRGSFGWANRKIEIPEGWMAVGSKLMYSPSDILGTGCEGTVVYRGTFDGREVAVKRVVSEFVKFAHREADLLRESDTHPHVIRYFCMESDSQFRYLALELCIASLNDYVEQKEVQQNVTIALRDIMKQATDGLAHLHASKIVHRDMKPQNVLITMASQRGEMRAVISDFGLCKRVQPGKNSISRGIASGLAGTDGWIAPEVLISASTSYPVDIFSLGCIFYYVLTSGTHPFGKSLHRQANIVNGEYTLNKLADLDDWSLADDLISSMLNVEPLHRLTADAVLNHPFFWTSEKRLAYFSDVSDRVEKEEDNSPVVRRIETDARIVVCGGWREKICDALKEDLRKFRTYKSFSVRDLLRAMRNKKHHYRELPEDVRQSLGDIPDQFLHYFTSRFPRLLLHVYKATEYCSGEAVFKRYYSDDVRARMYPIVEEEERVRKKIKEEMANEVWARAPKPVEQRTPLKLDKRNIKKKSNPNTD.

The signal sequence occupies residues 1 to 21 (MRATFHLFTFIFLLLFSSVIC). Topologically, residues 22–438 (ISTPGFRNDH…LLLLNNHPIP (417 aa)) are lumenal. Asn100 and Asn188 each carry an N-linked (GlcNAc...) asparagine glycan. Residues 439 to 455 (FYATLVTMFALLLTVIW) traverse the membrane as a helical segment. Residues 456–967 (QCGRQWDQQK…IKKKSNPNTD (512 aa)) are Cytoplasmic-facing. Residues 474 to 494 (EIVNNPGESRSAQTSKQSNRG) are disordered. The span at 479–494 (PGESRSAQTSKQSNRG) shows a compositional bias: polar residues. The Protein kinase domain occupies 518-778 (YSPSDILGTG…ADAVLNHPFF (261 aa)). ATP contacts are provided by residues 524–532 (LGTGCEGTV) and Lys546. The active-site Proton acceptor is the Asp636. Position 672 is a phosphoserine; by autocatalysis (Ser672). In terms of domain architecture, KEN spans 781 to 909 (SEKRLAYFSD…EAVFKRYYSD (129 aa)). Positions 948–967 (RTPLKLDKRNIKKKSNPNTD) are disordered. Over residues 957–967 (NIKKKSNPNTD) the composition is skewed to basic residues.

This sequence belongs to the protein kinase superfamily. Ser/Thr protein kinase family. Mg(2+) is required as a cofactor. Autophosphorylated mainly on serine residues.

Its subcellular location is the endoplasmic reticulum membrane. The enzyme catalyses L-seryl-[protein] + ATP = O-phospho-L-seryl-[protein] + ADP + H(+). It catalyses the reaction L-threonyl-[protein] + ATP = O-phospho-L-threonyl-[protein] + ADP + H(+). Its activity is regulated as follows. The kinase domain is activated by trans-autophosphorylation. Kinase activity is required for activation of the endoribonuclease domain. Functionally, senses unfolded proteins in the lumen of the endoplasmic reticulum via its N-terminal domain which leads to enzyme auto-activation. The active endoribonuclease domain splices xbp-1 precursor mRNA to produce the mature form which then induces transcription of UPR target genes. Unfolded protein response (UPR) transcriptional activation by ire-1, as well as translational attenuation by pek-1 in a complementary pathway, maintains ER homeostasis. Regulates the transcriptional up-regulation of nucleoside-diphosphatase apy-1 and many other genes, upon ER stress. By activating the UPR pathway during non-lethal hypoxia pre-conditioning, confers adaptive protection to subsequent exposure to hypoxia. ire-1 and pek-1 are redundant genes that control a pathway essential for larval development and survival. Plays a role in the nuclear retention of unspliced mRNAs. The polypeptide is Serine/threonine-protein kinase/endoribonuclease ire-1 (Caenorhabditis elegans).